Reading from the N-terminus, the 270-residue chain is MPELPEVETTRRGLAPHLQGRRVHGVILRRADLRWPIPPEVAELLPGQRIEDIRRRAKYLLLDTAIGSAVLHLGMSGSLRVLPGDTPLRAHDHVDISLDNGRLLRFNDPRRFGSLLWQPAGEVHPLLQGLGPEPLDDAFDGDYLFARSRGRSAPVKTFLMDQAVVVGVGNIYAAESLFKAGISPLREAGKISRERYQRLADAVKEILGYAITRGGTTLRDFISPDGAPGYFEQELLVYGRDGLPCPNCGRALKHATIGQRASVWCSHCQR.

Residue Pro2 is the Schiff-base intermediate with DNA of the active site. The Proton donor role is filled by Glu3. Lys58 (proton donor; for beta-elimination activity) is an active-site residue. 3 residues coordinate DNA: His91, Arg110, and Arg151. The FPG-type zinc finger occupies 236-270 (LVYGRDGLPCPNCGRALKHATIGQRASVWCSHCQR). The Proton donor; for delta-elimination activity role is filled by Arg260.

The protein belongs to the FPG family. Monomer. Zn(2+) serves as cofactor.

It catalyses the reaction Hydrolysis of DNA containing ring-opened 7-methylguanine residues, releasing 2,6-diamino-4-hydroxy-5-(N-methyl)formamidopyrimidine.. The enzyme catalyses 2'-deoxyribonucleotide-(2'-deoxyribose 5'-phosphate)-2'-deoxyribonucleotide-DNA = a 3'-end 2'-deoxyribonucleotide-(2,3-dehydro-2,3-deoxyribose 5'-phosphate)-DNA + a 5'-end 5'-phospho-2'-deoxyribonucleoside-DNA + H(+). Involved in base excision repair of DNA damaged by oxidation or by mutagenic agents. Acts as a DNA glycosylase that recognizes and removes damaged bases. Has a preference for oxidized purines, such as 7,8-dihydro-8-oxoguanine (8-oxoG). Has AP (apurinic/apyrimidinic) lyase activity and introduces nicks in the DNA strand. Cleaves the DNA backbone by beta-delta elimination to generate a single-strand break at the site of the removed base with both 3'- and 5'-phosphates. The polypeptide is Formamidopyrimidine-DNA glycosylase (Stenotrophomonas maltophilia (strain K279a)).